We begin with the raw amino-acid sequence, 252 residues long: tRNA (guanine-N(1)-)-methyltransferase (252 aa).

S-adenosyl-L-methionine contacts are provided by residues glycine 118 and 138 to 143; that span reads IGDYVL.

The protein belongs to the RNA methyltransferase TrmD family. In terms of assembly, homodimer.

It localises to the cytoplasm. It catalyses the reaction guanosine(37) in tRNA + S-adenosyl-L-methionine = N(1)-methylguanosine(37) in tRNA + S-adenosyl-L-homocysteine + H(+). Its function is as follows. Specifically methylates guanosine-37 in various tRNAs. This Pseudomonas aeruginosa (strain UCBPP-PA14) protein is tRNA (guanine-N(1)-)-methyltransferase.